The chain runs to 98 residues: Large ribosomal subunit protein bL27 (98 aa).

Residues 1–9 (MLKMNLQLF) constitute a propeptide that is removed on maturation.

This sequence belongs to the bacterial ribosomal protein bL27 family. In terms of processing, the N-terminus is cleaved by ribosomal processing cysteine protease Prp.

In Desulfitobacterium hafniense (strain DSM 10664 / DCB-2), this protein is Large ribosomal subunit protein bL27.